Reading from the N-terminus, the 254-residue chain is Ribosomal RNA small subunit methyltransferase J (254 aa).

Residues 107–108 (RD), 123–124 (ER), and aspartate 174 contribute to the S-adenosyl-L-methionine site.

Belongs to the methyltransferase superfamily. RsmJ family.

It localises to the cytoplasm. It carries out the reaction guanosine(1516) in 16S rRNA + S-adenosyl-L-methionine = N(2)-methylguanosine(1516) in 16S rRNA + S-adenosyl-L-homocysteine + H(+). Its function is as follows. Specifically methylates the guanosine in position 1516 of 16S rRNA. This is Ribosomal RNA small subunit methyltransferase J from Coxiella burnetii (strain CbuK_Q154) (Coxiella burnetii (strain Q154)).